The following is a 189-amino-acid chain: Frataxin-like protein, mitochondrial (189 aa).

The transit peptide at 1–50 (MNCARLHQRIPLRAMALTTTSYPALAPSHSFANASTSVMTASAMAVAHRA) directs the protein to the mitochondrion.

It belongs to the frataxin family. Interacts with IscU; the interaction is direct.

The protein resides in the mitochondrion. It catalyses the reaction 4 Fe(2+) + O2 + 4 H(+) = 4 Fe(3+) + 2 H2O. In terms of biological role, iron-binding protein which binds 2 iron atoms per monomer. Probably, acts as an iron carrier for the biosynthesis of Fe-S clusters. Stimulates the cysteine desulphurase activity of IscS in the presence of IscU. This is Frataxin-like protein, mitochondrial from Leishmania donovani.